The chain runs to 248 residues: Ras-related protein Rab-28 (248 aa).

The tract at residues Met-1–Asp-30 is disordered. Position 42–50 (Gly-42–Ser-50) interacts with GTP. An Effector region motif is present at residues Tyr-64–Phe-72. GTP contacts are provided by residues Asp-91 to Gln-95, Asn-152 to Asp-155, and Ser-182 to Lys-184. The segment at Gln-227–Thr-248 is disordered. Positions Ser-239–Thr-248 are enriched in polar residues.

This sequence belongs to the small GTPase superfamily. Rab family. In terms of tissue distribution, expressed in amphid and phasmid ciliated sensory neurons.

It is found in the cell projection. Its subcellular location is the cilium membrane. The protein localises to the perikaryon. The protein resides in the cytoplasm. It localises to the cytoskeleton. It is found in the cilium axoneme. In terms of biological role, GTPase. Intraflagellar transport (IFT) cargo that undergoes bidirectional IFT along the ciliary axoneme when in active GTP-bound state in amphid and phasmid ciliated sensory neurons. Targeting and function as IFT cargo may depend on the BBSome, an IFT cargo adapter. Does not undergo IFT when in inactive GDP-bound state. May in turn play a role in cilium structure and/or function in ciliated sensory neurons. This chain is Ras-related protein Rab-28, found in Caenorhabditis elegans.